A 220-amino-acid chain; its full sequence is Transcriptional regulatory protein LnrK (220 aa).

Positions 3–119 constitute a Response regulatory domain; the sequence is KIIITDDQDI…TIVKAVMTVH (117 aa). D54 is modified (4-aspartylphosphate). The 66-residue stretch at 151–216 folds into the HTH luxR-type domain; sequence KPNELLDLTE…QAAIYSVRYG (66 aa). A DNA-binding region (H-T-H motif) is located at residues 175–194; it reads NKEIAEKLYITEGTVKNHVS.

Post-translationally, phosphorylated by LnrJ.

The protein resides in the cytoplasm. In terms of biological role, required for resistance to linearmycins, a family of antibiotic-specialized metabolites produced by some streptomycetes. Member of the two-component regulatory system LnrJ/LnrK, which induces expression of the LnrLMN ABC transporter in response to linearmycins and other polyenes. Probably binds to the promoter region of the lnrLMN operon and directly regulates its expression. May also promote biofilm formation. This is Transcriptional regulatory protein LnrK from Bacillus subtilis (strain 168).